The sequence spans 439 residues: Xaa-Pro dipeptidase (439 aa).

Asp244, Asp255, His335, Glu380, and Glu419 together coordinate Mn(2+).

This sequence belongs to the peptidase M24B family. Bacterial-type prolidase subfamily. Requires Mn(2+) as cofactor.

It carries out the reaction Xaa-L-Pro dipeptide + H2O = an L-alpha-amino acid + L-proline. Splits dipeptides with a prolyl residue in the C-terminal position. In Shewanella amazonensis (strain ATCC BAA-1098 / SB2B), this protein is Xaa-Pro dipeptidase.